The chain runs to 282 residues: Homeobox protein CDX-4 (282 aa).

Disordered regions lie at residues 13–36 (MYPG…GGSG) and 98–156 (MNDM…SPYA). Residues 20–29 (SPGGSSTAGV) are compositionally biased toward low complexity. 2 stretches are compositionally biased toward polar residues: residues 110–124 (DYST…SNGG) and 133–148 (SLVS…TSPS). The segment at residues 171–230 (KEKYRVVYTDHQRLELEKEFHCNRYITIRRKSELAVNLGLSERQVKIWFQNRRAKERKMI) is a DNA-binding region (homeobox).

It belongs to the Caudal homeobox family.

It localises to the nucleus. This chain is Homeobox protein CDX-4 (Cdx4), found in Mus musculus (Mouse).